The chain runs to 178 residues: Female-specific protein transformer (178 aa).

Basic and acidic residues-rich tracts occupy residues 1–18 (MKMD…DSHG) and 25–40 (RERE…DSKK). The tract at residues 1-117 (MKMDADSSCG…RRYNPPPKII (117 aa)) is disordered. 2 stretches are compositionally biased toward basic residues: residues 59–73 (RRLR…RRSA) and 81–108 (RRHR…RSPR).

The protein localises to the nucleus speckle. In terms of biological role, member of the regulatory pathway controlling female somatic sexual differentiation, regulated by Sxl. Activates dsx female-specific splicing by promoting the formation of a splicing enhancer complex which consists of tra, tra2 and sr proteins. The chain is Female-specific protein transformer (tra) from Drosophila erecta (Fruit fly).